We begin with the raw amino-acid sequence, 467 residues long: Probable protein phosphatase 2C 6 (467 aa).

The interval 61–81 is disordered; it reads VEDDAVAPGRGEEGGEASAVG. A PPM-type phosphatase domain is found at 149–457; it reads LWGHKSICGR…DNISVIVVDL (309 aa). The Mn(2+) site is built by Asp-205, Gly-206, Asp-386, and Asp-448.

It belongs to the PP2C family. In terms of assembly, interacts with PYL9. Requires Mg(2+) as cofactor. Mn(2+) serves as cofactor.

It localises to the nucleus. It is found in the cytoplasm. Its subcellular location is the cytosol. The enzyme catalyses O-phospho-L-seryl-[protein] + H2O = L-seryl-[protein] + phosphate. The catalysed reaction is O-phospho-L-threonyl-[protein] + H2O = L-threonyl-[protein] + phosphate. Probable protein phosphatase that may function in abscisic acid (ABA) signaling. The polypeptide is Probable protein phosphatase 2C 6 (Oryza sativa subsp. japonica (Rice)).